Consider the following 184-residue polypeptide: Tyrosine-protein kinase receptor Tie-1 (184 aa).

The 164-residue stretch at 1-164 (QLLQFAADVA…RMQEARKAYV (164 aa)) folds into the Protein kinase domain. The active-site Proton acceptor is the Asp25. Tyr53 is subject to Phosphotyrosine; by autocatalysis.

Belongs to the protein kinase superfamily. Tyr protein kinase family. Tie subfamily. Interacts with svep1. Expressed in most populations of endothelial cells in 24 hours embryos, including the endocardium.

The protein localises to the cell membrane. The catalysed reaction is L-tyrosyl-[protein] + ATP = O-phospho-L-tyrosyl-[protein] + ADP + H(+). Functionally, transmembrane tyrosine-protein kinase. Required for the formation of facial lymphatic structures and brain lymphatic endothelial cells. Also required for embryonic ventral and dorsal migration of parachordal lymphoblasts along the arterial intersegmental vessel. Plays a role in the embryonic formation of the dorsal longitudinal anastomotic vessel. The chain is Tyrosine-protein kinase receptor Tie-1 (tie1) from Danio rerio (Zebrafish).